A 327-amino-acid polypeptide reads, in one-letter code: D-alanine--D-alanine ligase (327 aa).

An ATP-grasp domain is found at 113-312; the sequence is KRLWMTHGLA…YEDFVMQVLA (200 aa). Position 139–194 (139–194) interacts with ATP; sequence VADLGLPLIVKPAREGSSIGLTKVIAADQMRAAFEKAAGLDADVIAETFIDGAELT. Aspartate 266, glutamate 279, and asparagine 281 together coordinate Mg(2+).

This sequence belongs to the D-alanine--D-alanine ligase family. The cofactor is Mg(2+). Mn(2+) serves as cofactor.

It is found in the cytoplasm. The catalysed reaction is 2 D-alanine + ATP = D-alanyl-D-alanine + ADP + phosphate + H(+). It participates in cell wall biogenesis; peptidoglycan biosynthesis. Its function is as follows. Cell wall formation. The protein is D-alanine--D-alanine ligase of Cupriavidus metallidurans (strain ATCC 43123 / DSM 2839 / NBRC 102507 / CH34) (Ralstonia metallidurans).